Here is a 28-residue protein sequence, read N- to C-terminus: NU-theraphotoxin-Preg1a (28 aa).

Disulfide bonds link C2-C19, C9-C22, and C18-C27.

In terms of tissue distribution, expressed by the venom gland.

It localises to the secreted. Functionally, toxin that acts as an agonist on melanocortin receptors (MC1R, MC3R, MC5R, MC5R). After binding to MC1R, the peptide activates the hMC1R/Gs pathway, but after binding to MC4R, it is not able to activate or antagonize the MC4R/Gs pathway. Inhibits melanocyte stimulating hormone (MSH)-binding to human receptors (Ki=1.8 uM to MC1R, Ki=19.8 uM to MC3R, Ki=7.1 uM to MC4R, Ki=10.0 uM to MC5R). This toxin is structurally unrelated to the natural agonists. This Poecilotheria regalis (Indian ornamental tree spider) protein is NU-theraphotoxin-Preg1a.